The following is a 325-amino-acid chain: Replication factor C small subunit (325 aa).

52-59 (GPAGVGKT) contributes to the ATP binding site.

It belongs to the activator 1 small subunits family. RfcS subfamily. Heteromultimer composed of small subunits (RfcS) and large subunits (RfcL).

Its function is as follows. Part of the RFC clamp loader complex which loads the PCNA sliding clamp onto DNA. This Natronomonas pharaonis (strain ATCC 35678 / DSM 2160 / CIP 103997 / JCM 8858 / NBRC 14720 / NCIMB 2260 / Gabara) (Halobacterium pharaonis) protein is Replication factor C small subunit.